A 919-amino-acid chain; its full sequence is Phosphoenolpyruvate carboxylase (919 aa).

Residues H138 and K579 contribute to the active site.

It belongs to the PEPCase type 1 family. It depends on Mg(2+) as a cofactor.

It catalyses the reaction oxaloacetate + phosphate = phosphoenolpyruvate + hydrogencarbonate. Activity not stimulated by acetyl-CoA in the absence of any allosteric inhibitor, while the corresponding protein from E.coli is strongly stimulated. In terms of biological role, forms oxaloacetate, a four-carbon dicarboxylic acid source for the tricarboxylic acid cycle. This Corynebacterium glutamicum (strain ATCC 13032 / DSM 20300 / JCM 1318 / BCRC 11384 / CCUG 27702 / LMG 3730 / NBRC 12168 / NCIMB 10025 / NRRL B-2784 / 534) protein is Phosphoenolpyruvate carboxylase (ppc).